Consider the following 382-residue polypeptide: tRNA (guanine(26)-N(2))-dimethyltransferase (382 aa).

Residues 4–370 (TEVIEGKARL…REFSEILECV (367 aa)) form the Trm1 methyltransferase domain. The S-adenosyl-L-methionine site is built by Arg-44, Arg-69, Asp-87, Asp-113, and Ala-114. Cys-244, Cys-247, Cys-261, and Cys-264 together coordinate Zn(2+).

It belongs to the class I-like SAM-binding methyltransferase superfamily. Trm1 family.

The enzyme catalyses guanosine(26) in tRNA + 2 S-adenosyl-L-methionine = N(2)-dimethylguanosine(26) in tRNA + 2 S-adenosyl-L-homocysteine + 2 H(+). Its function is as follows. Dimethylates a single guanine residue at position 26 of a number of tRNAs using S-adenosyl-L-methionine as donor of the methyl groups. This chain is tRNA (guanine(26)-N(2))-dimethyltransferase, found in Metallosphaera sedula (strain ATCC 51363 / DSM 5348 / JCM 9185 / NBRC 15509 / TH2).